The sequence spans 171 residues: O-acetyl-ADP-ribose deacetylase 2 (171 aa).

One can recognise a Macro domain in the interval 1-171; the sequence is MNKITVIQGD…NYDLYLKLLN (171 aa). Substrate contacts are provided by residues 10 to 11, N24, 32 to 34, and 121 to 125; these read DI, GVD, and STGIY. D34 (proton acceptor) is an active-site residue.

The protein belongs to the MacroD-type family. YmdB subfamily. As to quaternary structure, homodimer. Interacts with RNase III.

It catalyses the reaction 3''-O-acetyl-ADP-D-ribose + H2O = ADP-D-ribose + acetate + H(+). The catalysed reaction is 2''-O-acetyl-ADP-D-ribose + H2O = ADP-D-ribose + acetate + H(+). Its function is as follows. Deacetylates O-acetyl-ADP ribose to yield ADP-ribose and free acetate. Down-regulates ribonuclease 3 (RNase III) activity. Acts by interacting directly with the region of the ribonuclease that is required for dimerization/activation. The chain is O-acetyl-ADP-ribose deacetylase 2 from Pantoea vagans (strain C9-1) (Pantoea agglomerans (strain C9-1)).